The primary structure comprises 205 residues: dITP/XTP pyrophosphatase (205 aa).

11–16 (TKNMGK) contributes to the substrate binding site. E44 and D73 together coordinate Mg(2+). D73 functions as the Proton acceptor in the catalytic mechanism. Residues S74, 158–161 (FGYD), K181, and 186–187 (HR) each bind substrate.

The protein belongs to the HAM1 NTPase family. Homodimer. Requires Mg(2+) as cofactor.

It carries out the reaction XTP + H2O = XMP + diphosphate + H(+). The catalysed reaction is dITP + H2O = dIMP + diphosphate + H(+). The enzyme catalyses ITP + H2O = IMP + diphosphate + H(+). Functionally, pyrophosphatase that catalyzes the hydrolysis of nucleoside triphosphates to their monophosphate derivatives, with a high preference for the non-canonical purine nucleotides XTP (xanthosine triphosphate), dITP (deoxyinosine triphosphate) and ITP. Seems to function as a house-cleaning enzyme that removes non-canonical purine nucleotides from the nucleotide pool, thus preventing their incorporation into DNA/RNA and avoiding chromosomal lesions. The protein is dITP/XTP pyrophosphatase of Bacillus thuringiensis subsp. konkukian (strain 97-27).